The chain runs to 141 residues: Hemoglobin subunit alpha (141 aa).

The Globin domain occupies 1-141 (VLSGTDKSNI…VSTVLTSKYR (141 aa)). The residue at position 3 (Ser-3) is a Phosphoserine. Lys-7 and Lys-11 each carry N6-succinyllysine. N6-acetyllysine; alternate is present on Lys-16. The residue at position 16 (Lys-16) is an N6-succinyllysine; alternate. Tyr-24 bears the Phosphotyrosine mark. Ser-35 is subject to Phosphoserine. Lys-40 bears the N6-succinyllysine mark. Residue Ser-49 is modified to Phosphoserine. His-58 is a binding site for O2. Residue His-87 coordinates heme b. Residue Ser-102 is modified to Phosphoserine. At Thr-108 the chain carries Phosphothreonine. Ser-124 is modified (phosphoserine). Phosphothreonine is present on residues Thr-134 and Thr-137. A Phosphoserine modification is found at Ser-138.

It belongs to the globin family. In terms of assembly, heterotetramer of two alpha chains and two beta chains. Red blood cells.

Involved in oxygen transport from the lung to the various peripheral tissues. In terms of biological role, hemopressin acts as an antagonist peptide of the cannabinoid receptor CNR1. Hemopressin-binding efficiently blocks cannabinoid receptor CNR1 and subsequent signaling. The polypeptide is Hemoglobin subunit alpha (HBA) (Talpa europaea (European mole)).